Reading from the N-terminus, the 472-residue chain is Phosphoglucosamine mutase (472 aa).

Ser-123 acts as the Phosphoserine intermediate in catalysis. Mg(2+) contacts are provided by Ser-123, Asp-262, Asp-264, and Asp-266. Ser-123 carries the post-translational modification Phosphoserine.

It belongs to the phosphohexose mutase family. The cofactor is Mg(2+). Post-translationally, activated by phosphorylation.

The enzyme catalyses alpha-D-glucosamine 1-phosphate = D-glucosamine 6-phosphate. Functionally, catalyzes the conversion of glucosamine-6-phosphate to glucosamine-1-phosphate. In Synechococcus elongatus (strain ATCC 33912 / PCC 7942 / FACHB-805) (Anacystis nidulans R2), this protein is Phosphoglucosamine mutase.